The sequence spans 766 residues: Oligopeptide transporter 7 (766 aa).

Residues 1–58 form a disordered region; it reads MEESEQVLPLLTNPKDLTNPSYASSSSSSSEPRDETEDLLLPISDENEEEEEENSPIR. Positions 45–54 are enriched in acidic residues; the sequence is DENEEEEEEN. The next 15 helical transmembrane spans lie at 79-99, 104-124, 154-174, 184-204, 247-267, 287-307, 324-344, 390-410, 446-466, 477-497, 509-529, 561-581, 627-647, 676-696, and 709-729; these read MWVLGTLSCILLSFLNQFFWY, LTISAISAQIAVVPLGRLMAA, ITIFANAGAGSVYAIHVVTVV, FFVSFIVIVTTQVLGFGWAGI, FVIAFVCSFAYYVFPGYLFQI, IGSGLHGLGVGAIGLDWSTIS, VGVGFVLVIYVLVPICYWLDV, LCTFFAISYGVGFAALSATIM, VPEWWFWCILVTNVGATIFAC, WWGVLLACTVAIIFTLPIGII, IITEYIIGYIYPGYPVANMCF, FMAQIVGTLISCFVYLTTAWW, LYKSVNWFFLVGAIAPILVWL, ATAVNYTTWVLAGFLSGFVVF, and VLSGALDAGLAFMGVLLYMCL.

This sequence belongs to the oligopeptide OPT transporter (TC 2.A.67.1) family. As to expression, expressed in the major and the first-order veins and in the hydathodes of the leaves. In the roots, expressed in circular zones surrounding lateral root primordia and in some part of the root epidermis. Expressed also in the sepals and the cortical tissues of the stem, but not in the conducting bundles, the petals or the reproductive tissues.

Its subcellular location is the membrane. Involved in the translocation of tetra- and pentapeptides across the cellular membrane in an energy-dependent manner. May also transport cadmium complexes. This chain is Oligopeptide transporter 7 (OPT7), found in Arabidopsis thaliana (Mouse-ear cress).